Consider the following 123-residue polypeptide: Small ribosomal subunit protein bS16 (123 aa).

Residues 87–123 are disordered; sequence VKNNPVKAKPGKRAQERAAEKAQKVADAAAAAADAAE. Residues 99-110 show a composition bias toward basic and acidic residues; that stretch reads RAQERAAEKAQK. A compositionally biased stretch (low complexity) spans 111–123; sequence VADAAAAAADAAE.

The protein belongs to the bacterial ribosomal protein bS16 family.

The chain is Small ribosomal subunit protein bS16 from Rhizobium johnstonii (strain DSM 114642 / LMG 32736 / 3841) (Rhizobium leguminosarum bv. viciae).